Consider the following 184-residue polypeptide: NADH-quinone oxidoreductase subunit B (184 aa).

The [4Fe-4S] cluster site is built by Cys63, Cys64, Cys128, and Cys158.

The protein belongs to the complex I 20 kDa subunit family. In terms of assembly, NDH-1 is composed of 14 different subunits. Subunits NuoB, C, D, E, F, and G constitute the peripheral sector of the complex. [4Fe-4S] cluster serves as cofactor.

Its subcellular location is the cell inner membrane. It carries out the reaction a quinone + NADH + 5 H(+)(in) = a quinol + NAD(+) + 4 H(+)(out). Its function is as follows. NDH-1 shuttles electrons from NADH, via FMN and iron-sulfur (Fe-S) centers, to quinones in the respiratory chain. Couples the redox reaction to proton translocation (for every two electrons transferred, four hydrogen ions are translocated across the cytoplasmic membrane), and thus conserves the redox energy in a proton gradient. In Xylella fastidiosa (strain 9a5c), this protein is NADH-quinone oxidoreductase subunit B.